The following is a 771-amino-acid chain: Glucocorticoid receptor (771 aa).

The modulating stretch occupies residues 1-415 (MDLKESVTSS…STTTGPPPKL (415 aa)). T8 carries the post-translational modification Phosphothreonine. The residue at position 22 (R22) is an Omega-N-methylarginine. S44, S133, S199, S207, and S222 each carry phosphoserine. The segment covering 129–172 (SRSTSVPENPKNSASAVSGTPTEEFPKTQSDLSSEQENLKSQAG) has biased composition (polar residues). The tract at residues 129 to 184 (SRSTSVPENPKNSASAVSGTPTEEFPKTQSDLSSEQENLKSQAGTNGGNVKFPPDQ) is disordered. A Glycyl lysine isopeptide (Lys-Gly) (interchain with G-Cter in SUMO2) cross-link involves residue K254. Phosphoserine is present on S263. Residues K273 and K289 each participate in a glycyl lysine isopeptide (Lys-Gly) (interchain with G-Cter in SUMO); alternate cross-link. Glycyl lysine isopeptide (Lys-Gly) (interchain with G-Cter in SUMO2); alternate cross-links involve residues K273 and K289. Phosphoserine is present on residues S303 and S400. The interval 390–411 (SSPGLRPDVSSPPSSSSTTTGP) is disordered. Residues 400–409 (SPPSSSSTTT) show a composition bias toward low complexity. Residue K414 forms a Glycyl lysine isopeptide (Lys-Gly) (interchain with G-Cter in ubiquitin) linkage. 2 consecutive NR C4-type zinc fingers follow at residues 416–436 (CLVC…CGSC) and 452–476 (CAGR…YRKC). Residues 416 to 481 (CLVCSDELSG…RYRKCLQAGM (66 aa)) constitute a DNA-binding region (nuclear receptor). Residues K475, K487, K489, and K490 each carry the N6-acetyllysine modification. The segment at 480–771 (GMNLQARKTK…DIKKLLFHQK (292 aa)) is interaction with CLOCK. A hinge region spans residues 482 to 517 (NLQARKTKKKIKGIQQATTGVSQNTSENPNKTIVPA). Residues 518–752 (TLPQLTPTLV…FPEMLAEIIT (235 aa)) enclose the NR LBD domain. The interaction with CRY1 stretch occupies residues 526 to 691 (LVSLLEVIEP…EIRMTYIKEL (166 aa)). K697 participates in a covalent cross-link: Glycyl lysine isopeptide (Lys-Gly) (interchain with G-Cter in SUMO).

Belongs to the nuclear hormone receptor family. NR3 subfamily. In terms of assembly, heteromultimeric cytoplasmic complex with HSP90AA1, HSPA1A/HSPA1B, and FKBP5 or another immunophilin such as PPID, STIP1, or the immunophilin homolog PPP5C. Upon ligand binding FKBP5 dissociates from the complex and FKBP4 takes its place, thereby linking the complex to dynein and mediating transport to the nucleus, where the complex dissociates. Probably forms a complex composed of chaperones HSP90 and HSP70, co-chaperones CDC37, PPP5C, TSC1 and client protein TSC2, CDK4, AKT, RAF1 and NR3C1; this complex does not contain co-chaperones STIP1/HOP and PTGES3/p23. Directly interacts with UNC45A. Binds to DNA as a homodimer, and as heterodimer with NR3C2 or the retinoid X receptor. Binds STAT5A and STAT5B homodimers and heterodimers. Interacts with NRIP1, POU2F1, POU2F2 and TRIM28. Interacts with several coactivator complexes, including the SMARCA4 complex, CREBBP/EP300, TADA2L (Ada complex) and p160 coactivators such as NCOA2 and NCOA6. Interaction with BAG1 inhibits transactivation. Interacts with HEXIM1 and TGFB1I1. Interacts with NCOA1. Interacts with NCOA3, SMARCA4, SMARCC1, SMARCD1, and SMARCE1. Interacts with CLOCK, CRY1 and CRY2 in a ligand-dependent fashion. Interacts with CIART. Interacts with RWDD3. Interacts with UBE2I/UBC9 and this interaction is enhanced in the presence of RWDD3. Interacts with GRIP1. Interacts with NR4A3 (via nuclear receptor DNA-binding domain), represses transcription activity of NR4A3 on the POMC promoter Nur response element (NurRE). Directly interacts with PNRC2 to attract and form a complex with UPF1 and DCP1A; the interaction leads to rapid mRNA degradation. Interacts with GSK3B. Interacts with FNIP1 and FNIP2. Interacts (via C-terminus) with HNRNPU (via C-terminus). Interacts with MCM3AP. Interacts (via domain NR LBD) with HSP90AA1 and HSP90AB1. In the absence of hormonal ligand, interacts with TACC1. Interacts (via NR LBD domain) with ZNF764 (via KRAB domain); the interaction regulates transcription factor activity of NR3C1 by directing its actions toward certain biologic pathways. In terms of processing, acetylation by CLOCK reduces its binding to glucocorticoid response elements and its transcriptional activity. Post-translationally, increased proteasome-mediated degradation in response to glucocorticoids. Phosphorylated in the absence of hormone; becomes hyperphosphorylated in the presence of glucocorticoid. The Ser-199, Ser-222 and Ser-400-phosphorylated forms are mainly cytoplasmic, and the Ser-207-phosphorylated form is nuclear. Phosphorylation at Ser-207 increases transcriptional activity. Phosphorylation at Ser-199, Ser-222 and Ser-400 decreases signaling capacity. Phosphorylation at Ser-400 may protect from glucocorticoid-induced apoptosis. Phosphorylation at Ser-199 and Ser-207 is not required in regulation of chromosome segregation. May be dephosphorylated by PPP5C, attenuates NR3C1 action. In terms of processing, ubiquitinated by UBR5, leading to its degradation: UBR5 specifically recognizes and binds ligand-bound NR3C1 when it is not associated with coactivators (NCOAs). In presence of NCOAs, the UBR5-degron is not accessible, preventing its ubiquitination and degradation. Post-translationally, sumoylation at Lys-273 and Lys-289 negatively regulates its transcriptional activity. Sumoylation at Lys-697 positively regulates its transcriptional activity in the presence of RWDD3. Sumoylation at Lys-273 and Lys-289 is dispensable whereas sumoylation at Lys-697 is critical for the stimulatory effect of RWDD3 on its transcriptional activity. Heat shock increases sumoylation in a RWDD3-dependent manner.

Its subcellular location is the cytoplasm. The protein resides in the nucleus. The protein localises to the mitochondrion. It is found in the cytoskeleton. It localises to the spindle. Its subcellular location is the microtubule organizing center. The protein resides in the centrosome. The protein localises to the chromosome. It is found in the nucleoplasm. Receptor for glucocorticoids (GC). Has a dual mode of action: as a transcription factor that binds to glucocorticoid response elements (GRE), both for nuclear and mitochondrial DNA, and as a modulator of other transcription factors. Affects inflammatory responses, cellular proliferation and differentiation in target tissues. Involved in chromatin remodeling. Plays a role in rapid mRNA degradation by binding to the 5' UTR of target mRNAs and interacting with PNRC2 in a ligand-dependent manner which recruits the RNA helicase UPF1 and the mRNA-decapping enzyme DCP1A, leading to RNA decay. Could act as a coactivator for STAT5-dependent transcription upon growth hormone (GH) stimulation and could reveal an essential role of hepatic GR in the control of body growth. Mediates glucocorticoid-induced apoptosis. Promotes accurate chromosome segregation during mitosis. May act as a tumor suppressor. May play a negative role in adipogenesis through the regulation of lipolytic and antilipogenic gene expression. The chain is Glucocorticoid receptor (NR3C1) from Cavia porcellus (Guinea pig).